Consider the following 509-residue polypeptide: Lanosterol 14-alpha demethylase (509 aa).

The helical transmembrane segment at 30 to 50 (GNLLSMLLIACAFTLSLVYLI) threads the bilayer. Cysteine 455 lines the heme pocket.

The protein belongs to the cytochrome P450 family. The cofactor is heme. Ubiquitinated by MARCHF6, leading to proteasomal degradation. Ubiquitously expressed with highest levels in testis, ovary, adrenal, prostate, liver, kidney and lung.

It localises to the endoplasmic reticulum membrane. Its subcellular location is the microsome membrane. The enzyme catalyses a 14alpha-methyl steroid + 3 reduced [NADPH--hemoprotein reductase] + 3 O2 = a Delta(14) steroid + formate + 3 oxidized [NADPH--hemoprotein reductase] + 4 H2O + 4 H(+). The catalysed reaction is lanosterol + 3 reduced [NADPH--hemoprotein reductase] + 3 O2 = 4,4-dimethyl-5alpha-cholesta-8,14,24-trien-3beta-ol + formate + 3 oxidized [NADPH--hemoprotein reductase] + 4 H2O + 4 H(+). It carries out the reaction 24,25-dihydrolanosterol + 3 reduced [NADPH--hemoprotein reductase] + 3 O2 = 4,4-dimethyl-8,14-cholestadien-3beta-ol + formate + 3 oxidized [NADPH--hemoprotein reductase] + 4 H2O + 4 H(+). It catalyses the reaction a 14alpha-methyl steroid + reduced [NADPH--hemoprotein reductase] + O2 = a 14alpha-hydroxymethyl steroid + oxidized [NADPH--hemoprotein reductase] + H2O + H(+). The enzyme catalyses a 14alpha-hydroxymethyl steroid + reduced [NADPH--hemoprotein reductase] + O2 = a 14alpha-formyl steroid + oxidized [NADPH--hemoprotein reductase] + 2 H2O + H(+). The catalysed reaction is a 14alpha-formyl steroid + reduced [NADPH--hemoprotein reductase] + O2 = a Delta(14) steroid + formate + oxidized [NADPH--hemoprotein reductase] + H2O + 2 H(+). It carries out the reaction lanosterol + reduced [NADPH--hemoprotein reductase] + O2 = 32-hydroxylanosterol + oxidized [NADPH--hemoprotein reductase] + H2O + H(+). It catalyses the reaction 32-hydroxylanosterol + reduced [NADPH--hemoprotein reductase] + O2 = 32-oxolanosterol + oxidized [NADPH--hemoprotein reductase] + 2 H2O + H(+). The enzyme catalyses 32-oxolanosterol + reduced [NADPH--hemoprotein reductase] + O2 = 4,4-dimethyl-5alpha-cholesta-8,14,24-trien-3beta-ol + formate + oxidized [NADPH--hemoprotein reductase] + H2O + 2 H(+). The catalysed reaction is 24,25-dihydrolanosterol + reduced [NADPH--hemoprotein reductase] + O2 = 32-hydroxy-24,25-dihydrolanosterol + oxidized [NADPH--hemoprotein reductase] + H2O + H(+). It carries out the reaction 32-hydroxy-24,25-dihydrolanosterol + reduced [NADPH--hemoprotein reductase] + O2 = 32-oxo-24,25-dihydrolanosterol + oxidized [NADPH--hemoprotein reductase] + 2 H2O + H(+). It catalyses the reaction 32-oxo-24,25-dihydrolanosterol + reduced [NADPH--hemoprotein reductase] + O2 = 4,4-dimethyl-8,14-cholestadien-3beta-ol + formate + oxidized [NADPH--hemoprotein reductase] + H2O + 2 H(+). It functions in the pathway steroid biosynthesis; zymosterol biosynthesis; zymosterol from lanosterol: step 1/6. Inhibited by azalanstat. Inhibited by azole antifungal agents ketoconazole, itraconazole and fluconazole. Sterol 14alpha-demethylase that plays a critical role in the cholesterol biosynthesis pathway, being cholesterol the major sterol component in mammalian membranes as well as a precursor for bile acid and steroid hormone synthesis. Cytochrome P450 monooxygenase that catalyzes the three-step oxidative removal of the 14alpha-methyl group (C-32) of sterols such as lanosterol (lanosta-8,24-dien-3beta-ol) and 24,25-dihydrolanosterol (DHL) in the form of formate, and converts the sterols to 4,4-dimethyl-5alpha-cholesta-8,14,24-trien-3beta-ol and 4,4-dimethyl-8,14-cholestadien-3beta-ol, respectively, which are intermediates of cholesterol biosynthesis. Can also demethylate substrates not intrinsic to mammals, such as eburicol (24-methylene-24,25-dihydrolanosterol), but at a lower rate than DHL. The protein is Lanosterol 14-alpha demethylase of Homo sapiens (Human).